A 509-amino-acid chain; its full sequence is Maturase K (509 aa).

This sequence belongs to the intron maturase 2 family. MatK subfamily.

The protein localises to the plastid. It localises to the chloroplast. Functionally, usually encoded in the trnK tRNA gene intron. Probably assists in splicing its own and other chloroplast group II introns. This is Maturase K from Nicotiana glauca (Glaucous tobacco).